Consider the following 184-residue polypeptide: Tumor necrosis factor receptor superfamily member 17 (184 aa).

Residues 1–54 (MLQMAGQCSQNEYFDSLLHACIPCQLRCSSNTPPLTCQRYCNASVTNSVKGTNA) are Extracellular-facing. Residues 7-41 (QCSQNEYFDSLLHACIPCQLRCSSNTPPLTCQRYC) form a TNFR-Cys repeat. 3 cysteine pairs are disulfide-bonded: C8–C21, C24–C37, and C28–C41. Residues 55 to 77 (ILWTCLGLSLIISLAVFVLMFLL) traverse the membrane as a helical; Signal-anchor for type III membrane protein segment. Topologically, residues 78–184 (RKINSEPLKD…TEIEKSISAR (107 aa)) are cytoplasmic.

Associates with TRAF1, TRAF2, TRAF3, TRAF5 and TRAF6. In terms of tissue distribution, expressed in mature B-cells, but not in T-cells or monocytes.

The protein resides in the cell membrane. It localises to the endomembrane system. Its function is as follows. Receptor for TNFSF13B/BLyS/BAFF and TNFSF13/APRIL. Promotes B-cell survival and plays a role in the regulation of humoral immunity. Activates NF-kappa-B and JNK. This is Tumor necrosis factor receptor superfamily member 17 (TNFRSF17) from Homo sapiens (Human).